The primary structure comprises 239 residues: Uridylate kinase (239 aa).

ATP is bound at residue 10-13; that stretch reads KFSG. The involved in allosteric activation by GTP stretch occupies residues 18 to 23; sequence GENGFG. UMP is bound at residue glycine 52. Residues glycine 53 and arginine 57 each coordinate ATP. UMP contacts are provided by residues aspartate 73 and 134 to 141; that span reads TGNPYFTT. ATP contacts are provided by threonine 161, tyrosine 167, and aspartate 170.

The protein belongs to the UMP kinase family. Homohexamer.

It localises to the cytoplasm. The enzyme catalyses UMP + ATP = UDP + ADP. Its pathway is pyrimidine metabolism; CTP biosynthesis via de novo pathway; UDP from UMP (UMPK route): step 1/1. Its activity is regulated as follows. Allosterically activated by GTP. Inhibited by UTP. Its function is as follows. Catalyzes the reversible phosphorylation of UMP to UDP. The chain is Uridylate kinase from Campylobacter jejuni subsp. doylei (strain ATCC BAA-1458 / RM4099 / 269.97).